Here is a 368-residue protein sequence, read N- to C-terminus: Saccharopine dehydrogenase [NAD(+), L-lysine-forming] (368 aa).

Residues arginine 18 and lysine 77 each coordinate L-saccharopine. Lysine 77 (proton acceptor) is an active-site residue. Serine 85 carries the post-translational modification Phosphoserine. Histidine 96 acts as the Proton donor in catalysis. Glutamine 101 is an L-saccharopine binding site. Arginine 130 serves as a coordination point for NAD(+). L-saccharopine is bound by residues arginine 131 and phenylalanine 135. Residues 203 to 204 (GR), aspartate 227, threonine 231, tyrosine 251, and valine 278 each bind NAD(+). A disulfide bond links cysteine 205 and cysteine 249. 279 to 281 (SCD) contributes to the L-saccharopine binding site. 319–322 (IDHL) provides a ligand contact to NAD(+).

Belongs to the AlaDH/PNT family. As to quaternary structure, monomer.

The catalysed reaction is L-saccharopine + NAD(+) + H2O = L-lysine + 2-oxoglutarate + NADH + H(+). Its pathway is amino-acid biosynthesis; L-lysine biosynthesis via AAA pathway; L-lysine from L-alpha-aminoadipate (fungal route): step 3/3. Its function is as follows. Catalyzes the NAD(+)-dependent cleavage of saccharopine to L-lysine and 2-oxoglutarate, the final step in the alpha-aminoadipate (AAA) pathway for lysin biosynthesis. The polypeptide is Saccharopine dehydrogenase [NAD(+), L-lysine-forming] (Schizosaccharomyces pombe (strain 972 / ATCC 24843) (Fission yeast)).